Reading from the N-terminus, the 229-residue chain is 5'-methylthioadenosine/S-adenosylhomocysteine nucleosidase (229 aa).

Glu12 (proton acceptor) is an active-site residue. Substrate-binding positions include Gly78, Ile152, and 173-174 (ME). Catalysis depends on Asp197, which acts as the Proton donor.

It belongs to the PNP/UDP phosphorylase family. MtnN subfamily.

It carries out the reaction S-adenosyl-L-homocysteine + H2O = S-(5-deoxy-D-ribos-5-yl)-L-homocysteine + adenine. It catalyses the reaction S-methyl-5'-thioadenosine + H2O = 5-(methylsulfanyl)-D-ribose + adenine. The catalysed reaction is 5'-deoxyadenosine + H2O = 5-deoxy-D-ribose + adenine. It participates in amino-acid biosynthesis; L-methionine biosynthesis via salvage pathway; S-methyl-5-thio-alpha-D-ribose 1-phosphate from S-methyl-5'-thioadenosine (hydrolase route): step 1/2. Functionally, catalyzes the irreversible cleavage of the glycosidic bond in both 5'-methylthioadenosine (MTA) and S-adenosylhomocysteine (SAH/AdoHcy) to adenine and the corresponding thioribose, 5'-methylthioribose and S-ribosylhomocysteine, respectively. Also cleaves 5'-deoxyadenosine, a toxic by-product of radical S-adenosylmethionine (SAM) enzymes, into 5-deoxyribose and adenine. The polypeptide is 5'-methylthioadenosine/S-adenosylhomocysteine nucleosidase (Mannheimia succiniciproducens (strain KCTC 0769BP / MBEL55E)).